Consider the following 449-residue polypeptide: Delta(8)-fatty-acid desaturase 2 (449 aa).

The Cytochrome b5 heme-binding domain occupies 7–91 (KRYVTSEDLK…VRDHHVSDVS (85 aa)). The heme site is built by His-42 and His-65. 2 consecutive transmembrane segments (helical) span residues 113–133 (VTLY…YGVL) and 138–158 (IWAH…SAYV). The short motif at 160–164 (HDSGH) is the Histidine box-1 element. A helical membrane pass occupies residues 176 to 196 (LIQLLSGNCLTGISIAWWKWT). Positions 197–201 (HNAHH) match the Histidine box-2 motif. The next 3 membrane-spanning stretches (helical) occupy residues 255–275 (FYPV…LLLF), 284–304 (ALNI…VSFL), and 311–331 (FIFV…FCLN). The Histidine box-3 motif lies at 374-378 (QLEHH).

Belongs to the fatty acid desaturase type 1 family. The cofactor is Fe cation. Highly expressed in flowers and siliques. Expressed at low levels in roots, leaves and stems.

The protein resides in the endoplasmic reticulum membrane. The catalysed reaction is an N-acyl-(4R)-4-hydroxysphinganine + 2 Fe(II)-[cytochrome b5] + O2 + 2 H(+) = a (4R,8E)-4-hydroxysphingenine ceramide + 2 Fe(III)-[cytochrome b5] + 2 H2O. It catalyses the reaction an N-acyl-(4R)-4-hydroxysphinganine + 2 Fe(II)-[cytochrome b5] + O2 + 2 H(+) = a (4R,8Z)-4-hydroxysphing-8-enine ceramide + 2 Fe(III)-[cytochrome b5] + 2 H2O. Functionally, plays a major role as delta(8)-fatty-acid desaturase which introduces a double bond at the 8-position in the long-chain base (LCB) of ceramides with or without a hydroxy group at the 4-position. The enzyme produces both the 8E and 8Z isomers (in a 4:1 ratio). This structural modification contributes to the quantitative partitioning of ceramides between the two major sphingolipid classes, glucosylceramides and glycosylinositolphosphoryl ceramides. Sphingolipids are important membrane components involved in environmental stress responses, such as resistance to chilling, and act as cell signaling molecules. The protein is Delta(8)-fatty-acid desaturase 2 (SLD2) of Arabidopsis thaliana (Mouse-ear cress).